The sequence spans 322 residues: Acetylglutamate kinase (322 aa).

Substrate is bound by residues 85–86 (GG), Arg107, and Asn211.

The protein belongs to the acetylglutamate kinase family. ArgB subfamily.

The protein resides in the cytoplasm. It carries out the reaction N-acetyl-L-glutamate + ATP = N-acetyl-L-glutamyl 5-phosphate + ADP. It functions in the pathway amino-acid biosynthesis; L-arginine biosynthesis; N(2)-acetyl-L-ornithine from L-glutamate: step 2/4. Functionally, catalyzes the ATP-dependent phosphorylation of N-acetyl-L-glutamate. This is Acetylglutamate kinase from Methanosarcina barkeri (strain Fusaro / DSM 804).